Reading from the N-terminus, the 261-residue chain is Putative hydro-lyase SSP0308 (261 aa).

It belongs to the D-glutamate cyclase family.

This chain is Putative hydro-lyase SSP0308, found in Staphylococcus saprophyticus subsp. saprophyticus (strain ATCC 15305 / DSM 20229 / NCIMB 8711 / NCTC 7292 / S-41).